Reading from the N-terminus, the 62-residue chain is uncharacterized protein (62 aa).

This is an uncharacterized protein from Mesomycoplasma hyorhinis (Mycoplasma hyorhinis).